We begin with the raw amino-acid sequence, 398 residues long: 2,3-bisphosphoglycerate-independent phosphoglycerate mutase (398 aa).

It belongs to the BPG-independent phosphoglycerate mutase family. A-PGAM subfamily.

The enzyme catalyses (2R)-2-phosphoglycerate = (2R)-3-phosphoglycerate. Its pathway is carbohydrate degradation; glycolysis; pyruvate from D-glyceraldehyde 3-phosphate: step 3/5. In terms of biological role, catalyzes the interconversion of 2-phosphoglycerate and 3-phosphoglycerate. This Methanosarcina barkeri (strain Fusaro / DSM 804) protein is 2,3-bisphosphoglycerate-independent phosphoglycerate mutase.